Reading from the N-terminus, the 195-residue chain is ATP-dependent Clp protease proteolytic subunit (195 aa).

Ser-98 acts as the Nucleophile in catalysis. Residue His-123 is part of the active site.

It belongs to the peptidase S14 family. Fourteen ClpP subunits assemble into 2 heptameric rings which stack back to back to give a disk-like structure with a central cavity, resembling the structure of eukaryotic proteasomes.

Its subcellular location is the cytoplasm. The enzyme catalyses Hydrolysis of proteins to small peptides in the presence of ATP and magnesium. alpha-casein is the usual test substrate. In the absence of ATP, only oligopeptides shorter than five residues are hydrolyzed (such as succinyl-Leu-Tyr-|-NHMec, and Leu-Tyr-Leu-|-Tyr-Trp, in which cleavage of the -Tyr-|-Leu- and -Tyr-|-Trp bonds also occurs).. Its function is as follows. Cleaves peptides in various proteins in a process that requires ATP hydrolysis. Has a chymotrypsin-like activity. Plays a major role in the degradation of misfolded proteins. The sequence is that of ATP-dependent Clp protease proteolytic subunit from Sulfurovum sp. (strain NBC37-1).